We begin with the raw amino-acid sequence, 79 residues long: Small ribosomal subunit protein bS16 (79 aa).

Belongs to the bacterial ribosomal protein bS16 family.

In Hahella chejuensis (strain KCTC 2396), this protein is Small ribosomal subunit protein bS16.